We begin with the raw amino-acid sequence, 541 residues long: Chaperonin GroEL 2 (541 aa).

ATP contacts are provided by residues 29–32 (TLGP), 86–90 (DGTTT), glycine 413, 476–478 (NAA), and aspartate 492.

Belongs to the chaperonin (HSP60) family. In terms of assembly, forms a cylinder of 14 subunits composed of two heptameric rings stacked back-to-back. Interacts with the co-chaperonin GroES.

It is found in the secreted. Its subcellular location is the capsule. The protein resides in the cell surface. The protein localises to the cell wall. It carries out the reaction ATP + H2O + a folded polypeptide = ADP + phosphate + an unfolded polypeptide.. Together with its co-chaperonin GroES, plays an essential role in assisting protein folding. The GroEL-GroES system forms a nano-cage that allows encapsulation of the non-native substrate proteins and provides a physical environment optimized to promote and accelerate protein folding. The protein is Chaperonin GroEL 2 of Mycolicibacterium vanbaalenii (strain DSM 7251 / JCM 13017 / BCRC 16820 / KCTC 9966 / NRRL B-24157 / PYR-1) (Mycobacterium vanbaalenii).